Consider the following 505-residue polypeptide: ATP synthase subunit alpha, chloroplastic (505 aa).

Position 170 to 177 (170 to 177 (GDRQTGKT)) interacts with ATP.

Belongs to the ATPase alpha/beta chains family. As to quaternary structure, F-type ATPases have 2 components, CF(1) - the catalytic core - and CF(0) - the membrane proton channel. CF(1) has five subunits: alpha(3), beta(3), gamma(1), delta(1), epsilon(1). CF(0) has four main subunits: a, b, b' and c.

It is found in the plastid. The protein localises to the chloroplast thylakoid membrane. The enzyme catalyses ATP + H2O + 4 H(+)(in) = ADP + phosphate + 5 H(+)(out). Its function is as follows. Produces ATP from ADP in the presence of a proton gradient across the membrane. The alpha chain is a regulatory subunit. This is ATP synthase subunit alpha, chloroplastic from Zygnema circumcarinatum (Green alga).